A 216-amino-acid chain; its full sequence is Serine/threonine-protein phosphatase 1 (216 aa).

Positions 24, 26, 53, and 79 each coordinate Mn(2+). Histidine 80 acts as the Proton donor in catalysis. Histidine 185 contacts Mn(2+).

This sequence belongs to the PPP phosphatase family. PP-1 subfamily. Requires Mn(2+) as cofactor.

The enzyme catalyses O-phospho-L-seryl-[protein] + H2O = L-seryl-[protein] + phosphate. It carries out the reaction O-phospho-L-threonyl-[protein] + H2O = L-threonyl-[protein] + phosphate. With respect to regulation, inhibited by cadmium, copper, zinc when added cobalt when added concomitantly with manganese. Can hydrolyze phosphorylated Ser-, Thr- or Tyr-substrates in vitro. The natural substrate is unknown. The chain is Serine/threonine-protein phosphatase 1 (pphA) from Salmonella typhimurium (strain LT2 / SGSC1412 / ATCC 700720).